The chain runs to 482 residues: Reduced viability upon starvation protein 167 (482 aa).

Residue Ser2 is modified to N-acetylserine. One can recognise a BAR domain in the interval 17–254; that stretch reads FRQKFKMGEQ…YFDLNSDIVE (238 aa). Coiled-coil stretches lie at residues 31–64 and 174–204; these read VYED…NGML and AKDE…LKTQ. Residue Lys242 forms a Glycyl lysine isopeptide (Lys-Gly) (interchain with G-Cter in ubiquitin) linkage. Phosphoserine; by FUS3 and PHO85 is present on residues Ser299, Ser321, and Ser379. The disordered stretch occupies residues 382 to 407; sequence LTGLGFQQSPQQQQGPPPAYSNPLTS. Residues 421-482 enclose the SH3 domain; that stretch reads PGVETVTALY…PGNYVQLNKN (62 aa). Lys481 is covalently cross-linked (Glycyl lysine isopeptide (Lys-Gly) (interchain with G-Cter in ubiquitin)).

As to quaternary structure, binds to actin. Interacts with ABP1, GYL1, GYP5, PCL2 and YBR108W. In terms of processing, phosphorylated redundantly by cyclin-dependent kinase PHO85 in association with PCL1,2-type cyclins or by MAP kinase FUS3. Phosphorylation inhibits interaction with complexes involved in actin cytoskeleton function.

The protein resides in the cytoplasm. Its subcellular location is the cytoskeleton. Functionally, component of a cytoskeletal structure that is required for the formation of endocytic vesicles at the plasma membrane level. Could be implicated in cytoskeletal reorganization in response to environmental stresses and could act in the budding site selection mechanism. This chain is Reduced viability upon starvation protein 167 (RVS167), found in Saccharomyces cerevisiae (strain ATCC 204508 / S288c) (Baker's yeast).